A 62-amino-acid chain; its full sequence is Inner membrane protein p12 (62 aa).

Residues 16 to 36 traverse the membrane as a helical segment; sequence LLIVAIVVVIMAIMLYYFWWM.

Belongs to the asfivirus inner membrane protein p12 family. Homomultimer; disulfide-linked. In terms of processing, not glycosylated.

It is found in the virion membrane. This is Inner membrane protein p12 from African swine fever virus (isolate Pig/Kenya/KEN-50/1950) (ASFV).